Consider the following 233-residue polypeptide: Protein Atu3128 (233 aa).

It belongs to the glycosyl hydrolase 88 family.

Functionally, seems to regulate the surface properties of the bacterium in the presence of plant cells or plant cell extracts. Mutations in this protein are responsible for an increased aggregation of the bacteria in the presence of pea root cap cells. The chain is Protein Atu3128 from Agrobacterium fabrum (strain C58 / ATCC 33970) (Agrobacterium tumefaciens (strain C58)).